Here is a 244-residue protein sequence, read N- to C-terminus: Biosynthetic peptidoglycan transglycosylase (244 aa).

Residues 26–46 traverse the membrane as a helical segment; sequence FLSYFIGLTVALTFLFRFVPI.

This sequence belongs to the glycosyltransferase 51 family.

It is found in the cell inner membrane. It catalyses the reaction [GlcNAc-(1-&gt;4)-Mur2Ac(oyl-L-Ala-gamma-D-Glu-L-Lys-D-Ala-D-Ala)](n)-di-trans,octa-cis-undecaprenyl diphosphate + beta-D-GlcNAc-(1-&gt;4)-Mur2Ac(oyl-L-Ala-gamma-D-Glu-L-Lys-D-Ala-D-Ala)-di-trans,octa-cis-undecaprenyl diphosphate = [GlcNAc-(1-&gt;4)-Mur2Ac(oyl-L-Ala-gamma-D-Glu-L-Lys-D-Ala-D-Ala)](n+1)-di-trans,octa-cis-undecaprenyl diphosphate + di-trans,octa-cis-undecaprenyl diphosphate + H(+). It participates in cell wall biogenesis; peptidoglycan biosynthesis. Its function is as follows. Peptidoglycan polymerase that catalyzes glycan chain elongation from lipid-linked precursors. In Mannheimia succiniciproducens (strain KCTC 0769BP / MBEL55E), this protein is Biosynthetic peptidoglycan transglycosylase.